The primary structure comprises 122 residues: Large ribosomal subunit protein uL18 (122 aa).

Belongs to the universal ribosomal protein uL18 family. In terms of assembly, part of the 50S ribosomal subunit; part of the 5S rRNA/L5/L18/L25 subcomplex. Contacts the 5S and 23S rRNAs.

Its function is as follows. This is one of the proteins that bind and probably mediate the attachment of the 5S RNA into the large ribosomal subunit, where it forms part of the central protuberance. In Buchnera aphidicola subsp. Acyrthosiphon pisum (strain 5A), this protein is Large ribosomal subunit protein uL18.